We begin with the raw amino-acid sequence, 228 residues long: Indole-3-glycerol phosphate synthase (228 aa).

Belongs to the TrpC family.

It catalyses the reaction 1-(2-carboxyphenylamino)-1-deoxy-D-ribulose 5-phosphate + H(+) = (1S,2R)-1-C-(indol-3-yl)glycerol 3-phosphate + CO2 + H2O. The protein operates within amino-acid biosynthesis; L-tryptophan biosynthesis; L-tryptophan from chorismate: step 4/5. The protein is Indole-3-glycerol phosphate synthase of Pyrococcus furiosus (strain ATCC 43587 / DSM 3638 / JCM 8422 / Vc1).